The following is a 202-amino-acid chain: Large ribosomal subunit protein uL4 (202 aa).

Polar residues predominate over residues 42 to 52; sequence GTKAQKSRSQV. Residues 42–70 are disordered; sequence GTKAQKSRSQVSGTTKKSKKQKGGGARHG.

It belongs to the universal ribosomal protein uL4 family. Part of the 50S ribosomal subunit.

In terms of biological role, one of the primary rRNA binding proteins, this protein initially binds near the 5'-end of the 23S rRNA. It is important during the early stages of 50S assembly. It makes multiple contacts with different domains of the 23S rRNA in the assembled 50S subunit and ribosome. Forms part of the polypeptide exit tunnel. The sequence is that of Large ribosomal subunit protein uL4 from Xylella fastidiosa (strain 9a5c).